The chain runs to 104 residues: Nucleoid-associated protein Ccon26_18480 (104 aa).

The span at 16 to 34 (DVQKQAKQMEEESKNKEFG) shows a compositional bias: basic and acidic residues. The interval 16–38 (DVQKQAKQMEEESKNKEFGAKSG) is disordered.

The protein belongs to the YbaB/EbfC family. In terms of assembly, homodimer.

The protein resides in the cytoplasm. It is found in the nucleoid. In terms of biological role, binds to DNA and alters its conformation. May be involved in regulation of gene expression, nucleoid organization and DNA protection. The chain is Nucleoid-associated protein Ccon26_18480 from Campylobacter concisus (strain 13826).